The following is a 32-amino-acid chain: Cytochrome b6-f complex subunit 7 (32 aa).

A helical membrane pass occupies residues 9–27; that stretch reads AAVFWILIPIGLVGGALLL.

This sequence belongs to the PetM family. As to quaternary structure, the 4 large subunits of the cytochrome b6-f complex are cytochrome b6, subunit IV (17 kDa polypeptide, PetD), cytochrome f and the Rieske protein, while the 4 small subunits are PetG, PetL, PetM and PetN. The complex functions as a dimer.

It localises to the cellular thylakoid membrane. Functionally, component of the cytochrome b6-f complex, which mediates electron transfer between photosystem II (PSII) and photosystem I (PSI), cyclic electron flow around PSI, and state transitions. The sequence is that of Cytochrome b6-f complex subunit 7 from Prochlorococcus marinus (strain MIT 9515).